The primary structure comprises 63 residues: Small ribosomal subunit protein bS21 (63 aa).

It belongs to the bacterial ribosomal protein bS21 family.

This Bacteroides fragilis (strain ATCC 25285 / DSM 2151 / CCUG 4856 / JCM 11019 / LMG 10263 / NCTC 9343 / Onslow / VPI 2553 / EN-2) protein is Small ribosomal subunit protein bS21.